Reading from the N-terminus, the 347-residue chain is FK506-binding protein-like (347 aa).

A disordered region spans residues 1-36 (METSLISPMKENNTAQPQQREENTQQNLNAAVPIKQ). T3 is subject to Phosphothreonine. TPR repeat units lie at residues 208-241 (AKEE…LLTL), 250-283 (TILH…EPGH), and 284-317 (LKAL…DPKN).

Forms a ternary complex with CDKN1A/p21 and HSP90AB1/Hsp90.

In terms of biological role, may be involved in response to X-ray. Regulates p21 protein stability by binding to Hsp90 and p21. The protein is FK506-binding protein-like (Fkbpl) of Rattus norvegicus (Rat).